The sequence spans 803 residues: Zinc finger X-linked protein ZXDB (803 aa).

Disordered regions lie at residues 1–91 (MEIP…GGDD), 120–140 (EAEE…AGPT), and 218–260 (AAHP…GPRG). The span at 13-26 (LQGGGGGGIPAGGG) shows a compositional bias: gly residues. 10 C2H2-type zinc fingers span residues 271 to 295 (YLCP…LLTH), 304 to 328 (FKCP…LQSH), 334 to 358 (FGCP…MKGH), 364 to 386 (FKCE…QRSH), 393 to 417 (YQCA…NRAH), 424 to 448 (FSCS…LRSH), 454 to 478 (FLCD…KRKH), 484 to 508 (FMCP…SITH), 514 to 538 (FVCP…SKKH), and 547 to 572 (SRCP…VKRH). A required for interaction with ZXDC region spans residues 271 to 577 (YLCPEAQCGQ…MVKRHKVGQD (307 aa)). A required for transcriptional activation region spans residues 576 to 703 (QDLLAQLEAA…NMDEVSSVSV (128 aa)).

The protein belongs to the ZXD family. As to quaternary structure, self-associates. Interacts with ZXDC and CIITA. In terms of tissue distribution, may be expressed in brain, heart, kidney, liver, lung, muscle and placenta.

Its subcellular location is the nucleus. In terms of biological role, cooperates with CIITA to promote transcription of MHC class I and MHC class II genes. The protein is Zinc finger X-linked protein ZXDB (ZXDB) of Homo sapiens (Human).